A 93-amino-acid polypeptide reads, in one-letter code: Small ribosomal subunit protein uS17 (93 aa).

It belongs to the universal ribosomal protein uS17 family. In terms of assembly, part of the 30S ribosomal subunit.

Functionally, one of the primary rRNA binding proteins, it binds specifically to the 5'-end of 16S ribosomal RNA. This is Small ribosomal subunit protein uS17 from Corynebacterium kroppenstedtii (strain DSM 44385 / JCM 11950 / CIP 105744 / CCUG 35717).